Reading from the N-terminus, the 183-residue chain is 1,6-anhydro-N-acetylmuramyl-L-alanine amidase AmpD (183 aa).

Residues 30 to 167 enclose the N-acetylmuramoyl-L-alanine amidase domain; the sequence is LLVVHNISLP…APDRKTDPGP (138 aa). Histidine 34 contacts Zn(2+). Catalysis depends on glutamate 116, which acts as the Proton acceptor. The Zn(2+) site is built by histidine 154 and aspartate 164.

This sequence belongs to the N-acetylmuramoyl-L-alanine amidase 2 family. It depends on Zn(2+) as a cofactor.

Its subcellular location is the cytoplasm. It catalyses the reaction Hydrolyzes the link between N-acetylmuramoyl residues and L-amino acid residues in certain cell-wall glycopeptides.. In terms of biological role, involved in cell wall peptidoglycan recycling. Specifically cleaves the amide bond between the lactyl group of N-acetylmuramic acid and the alpha-amino group of the L-alanine in degradation products containing an anhydro N-acetylmuramyl moiety. Is also involved in beta-lactamase induction. This chain is 1,6-anhydro-N-acetylmuramyl-L-alanine amidase AmpD (ampD), found in Escherichia coli (strain K12).